A 398-amino-acid polypeptide reads, in one-letter code: MDTALPSVLIGGGLSVSVSISTATKAGSQSISSHLSTSSLRLTARHRNRRRLPLLASSSESPPAQLAAASTESQSRSSRWVVVMDTPPAAAGGSGVSRAEAVDYYAATLAQVVGSEKEAQMRICEASWDGTYEFRCEIDEDASKELAKMPGVLSVQLDMGNKSEKDNHSLSLSTANLVSISDGASTSSSGKNEFWLVRMEKPGVEVVTKAQMVDHYTQILMKVLGNEQDAQVSIYHVSWDRDYGFCCHIDEECAKELADVPGVLSVQPDTNFGSDNKNYKGDDGVKSSEGTGAVDIKTKRLFVTGLSFYTSEKTLRAAFEPFGELVEVKIIMDRISKRSKGYAFVEYTTEEAGGAALKAMNGQIINGWMIVVDVAKTRSRDRLSGGSNQAFRPHYQAR.

The N-terminal 88 residues, 1–88, are a transit peptide targeting the chloroplast; sequence MDTALPSVLI…RWVVVMDTPP (88 aa). Low complexity predominate over residues 54 to 70; it reads LLASSSESPPAQLAAAS. The interval 54 to 79 is disordered; that stretch reads LLASSSESPPAQLAAASTESQSRSSR. The RRM domain maps to 299–377; that stretch reads KRLFVTGLSF…WMIVVDVAKT (79 aa).

It is found in the plastid. The protein localises to the chloroplast. Involved in C-to-U editing of chloroplastic RNA. Functions as major chloroplastic editing factor. Controls a majority of the chloroplastic editing sites. In Zea mays (Maize), this protein is Organelle RRM domain-containing protein 1, chloroplastic (ORRM1).